Here is a 409-residue protein sequence, read N- to C-terminus: Thiaminase-1 (409 aa).

The first 29 residues, 1-29 (MSKVKGFIYKPLMVMLALLLVVVSPAGAG), serve as a signal peptide directing secretion. The active-site Nucleophile is cysteine 143. The Proton acceptor role is filled by glutamate 271.

As to quaternary structure, monomer.

It localises to the secreted. It catalyses the reaction pyridine + thiamine = heteropyrithiamine + 5-(2-hydroxyethyl)-4-methylthiazole. Its function is as follows. Degrades thiamine by replacing its thiazole moiety with a wide range of nucleophiles. In Paenibacillus thiaminolyticus (Bacillus thiaminolyticus), this protein is Thiaminase-1.